The following is a 347-amino-acid chain: Selenide, water dikinase (347 aa).

The active site involves Cys17. ATP is bound by residues Lys20 and 48 to 50; that span reads TRD. Asp51 serves as a coordination point for Mg(2+). ATP contacts are provided by residues Asp68, Asp91, and 139–141; that span reads GHS. Asp91 lines the Mg(2+) pocket. Asp227 contributes to the Mg(2+) binding site.

The protein belongs to the selenophosphate synthase 1 family. Class I subfamily. In terms of assembly, homodimer. The cofactor is Mg(2+).

The enzyme catalyses hydrogenselenide + ATP + H2O = selenophosphate + AMP + phosphate + 2 H(+). Its function is as follows. Synthesizes selenophosphate from selenide and ATP. The polypeptide is Selenide, water dikinase (Enterobacter sp. (strain 638)).